The chain runs to 88 residues: Small ribosomal subunit protein bS20 (88 aa).

The tract at residues 1–21 is disordered; it reads MANTTSAKKATRKIARRTAVN.

The protein belongs to the bacterial ribosomal protein bS20 family.

Functionally, binds directly to 16S ribosomal RNA. This chain is Small ribosomal subunit protein bS20, found in Sinorhizobium fredii (strain NBRC 101917 / NGR234).